A 902-amino-acid chain; its full sequence is HTH-type transcriptional regulator MalT (902 aa).

39–46 (SPAGYGKT) lines the ATP pocket. The 66-residue stretch at 832–897 (ELVRTSPLTQ…EAIVTAENLL (66 aa)) folds into the HTH luxR-type domain. Residues 856–875 (NEQIAQELDVAGTTIKTHIR) constitute a DNA-binding region (H-T-H motif).

Belongs to the MalT family. Monomer in solution. Oligomerizes to an active state in the presence of the positive effectors ATP and maltotriose.

Activated by ATP and maltotriose, which are both required for DNA binding. In terms of biological role, positively regulates the transcription of the maltose regulon whose gene products are responsible for uptake and catabolism of malto-oligosaccharides. Specifically binds to the promoter region of its target genes, recognizing a short DNA motif called the MalT box. In Vibrio parahaemolyticus serotype O3:K6 (strain RIMD 2210633), this protein is HTH-type transcriptional regulator MalT.